A 299-amino-acid polypeptide reads, in one-letter code: Ophiobolin family sesterterpenoid biosynthesis cluster acetyltransferase (299 aa).

The first 20 residues, 1-20 (MYFFRALLSPVVLWPALVSG), serve as a signal peptide directing secretion. 7 N-linked (GlcNAc...) asparagine glycosylation sites follow: asparagine 28, asparagine 58, asparagine 77, asparagine 126, asparagine 177, asparagine 212, and asparagine 282.

Belongs to the bfoA family.

Its pathway is secondary metabolite biosynthesis; terpenoid biosynthesis. Its function is as follows. Acetyltransferase; part of the gene cluster that mediates the biosynthesis of an ophiobolin family sesterterpenoid. Sesterterpenoid synthase; part of the gene cluster that mediates the biosynthesis of an ophiobolin family sesterterpenoid. The sequence is that of Ophiobolin family sesterterpenoid biosynthesis cluster acetyltransferase from Aspergillus terreus.